A 195-amino-acid chain; its full sequence is Small ribosomal subunit protein uS4c (195 aa).

The S4 RNA-binding domain occupies 82–143; the sequence is MRLDNILFRL…KQRSKALIQN (62 aa).

Belongs to the universal ribosomal protein uS4 family. In terms of assembly, part of the 30S ribosomal subunit. Contacts protein S5. The interaction surface between S4 and S5 is involved in control of translational fidelity.

It localises to the plastid. The protein resides in the chloroplast. One of the primary rRNA binding proteins, it binds directly to 16S rRNA where it nucleates assembly of the body of the 30S subunit. Functionally, with S5 and S12 plays an important role in translational accuracy. In Watsonia angusta, this protein is Small ribosomal subunit protein uS4c (rps4).